Reading from the N-terminus, the 687-residue chain is DNA-directed RNA polymerase subunit beta' (687 aa).

Zn(2+) contacts are provided by cysteine 69, cysteine 71, cysteine 87, and cysteine 90. The Mg(2+) site is built by aspartate 495, aspartate 497, and aspartate 499.

The protein belongs to the RNA polymerase beta' chain family. RpoC1 subfamily. In plastids the minimal PEP RNA polymerase catalytic core is composed of four subunits: alpha, beta, beta', and beta''. When a (nuclear-encoded) sigma factor is associated with the core the holoenzyme is formed, which can initiate transcription. Requires Mg(2+) as cofactor. The cofactor is Zn(2+).

It is found in the plastid. The protein localises to the chloroplast. The enzyme catalyses RNA(n) + a ribonucleoside 5'-triphosphate = RNA(n+1) + diphosphate. Its function is as follows. DNA-dependent RNA polymerase catalyzes the transcription of DNA into RNA using the four ribonucleoside triphosphates as substrates. The protein is DNA-directed RNA polymerase subunit beta' of Solanum tuberosum (Potato).